Consider the following 508-residue polypeptide: Methionine--tRNA ligase (508 aa).

A 'HIGH' region motif is present at residues 12–22; it reads YYVNDIPHIGH. Positions 295 to 299 match the 'KMSKS' region motif; sequence KISKS. Lys-298 provides a ligand contact to ATP.

Belongs to the class-I aminoacyl-tRNA synthetase family. MetG type 2B subfamily. In terms of assembly, monomer.

The protein resides in the cytoplasm. It carries out the reaction tRNA(Met) + L-methionine + ATP = L-methionyl-tRNA(Met) + AMP + diphosphate. Is required not only for elongation of protein synthesis but also for the initiation of all mRNA translation through initiator tRNA(fMet) aminoacylation. This is Methionine--tRNA ligase from Rickettsia conorii (strain ATCC VR-613 / Malish 7).